A 259-amino-acid chain; its full sequence is Emerin (259 aa).

Met1 is modified (N-acetylmethionine). One can recognise an LEM domain in the interval Met1 to Arg45. A phosphoserine mark is found at Ser8, Ser29, Ser54, Ser72, Ser88, Ser99, Ser141, and Ser142. The interval Arg46–Gln223 is interaction with F-actin. Position 161 is a phosphotyrosine (Tyr161). The interaction with CTNNB1 stretch occupies residues Arg168–Ser187. Residues Ser171, Ser174, and Ser176 each carry the phosphoserine modification. A helical transmembrane segment spans residues Val224–Tyr244.

Interacts with lamins A and C, BANF1, GMCL, BCLAF1 and YTHDC1/YT521. Interacts with TMEM43; the interaction retains emerin in the inner nuclear membrane. Interacts with ACTB, SPTAN1, F-actin, CTNNB1 and beta-tubulin. Interacts with SUN1 and SUN2. Interacts with TMEM201. Interacts with NEMP1. In the ovary, highest expression is seen in primordial follicle oocytes (at protein level). Detected in embryonic fibroblasts, skeletal muscle, heart muscle and tongue epithelium (at protein level). Widely expressed.

The protein localises to the nucleus inner membrane. It is found in the nucleus outer membrane. Functionally, stabilizes and promotes the formation of a nuclear actin cortical network. Stimulates actin polymerization in vitro by binding and stabilizing the pointed end of growing filaments. Inhibits beta-catenin activity by preventing its accumulation in the nucleus. Acts by influencing the nuclear accumulation of beta-catenin through a CRM1-dependent export pathway. Links centrosomes to the nuclear envelope via a microtubule association. Required for proper localization of non-farnesylated prelamin-A/C. Together with NEMP1, contributes to nuclear envelope stiffness in germ cells. The chain is Emerin (Emd) from Mus musculus (Mouse).